The chain runs to 1295 residues: Phosphoribosylformylglycinamidine synthase (1295 aa).

Residues 305–327 (WPGAATGSGGEIRDEGATGRGAK) form a disordered region. Residues 307 to 318 (GAATGSGGEIRD) and Ala-678 contribute to the ATP site. Positions 718, 722, and 884 each coordinate Mg(2+). Residue Ser-886 coordinates ATP. The Glutamine amidotransferase type-1 domain maps to 1042 to 1295 (VAVLREQGVN…IFRNARKQLG (254 aa)). Cys-1135 functions as the Nucleophile in the catalytic mechanism. Active-site residues include His-1260 and Glu-1262.

In the N-terminal section; belongs to the FGAMS family. Monomer.

The protein localises to the cytoplasm. The catalysed reaction is N(2)-formyl-N(1)-(5-phospho-beta-D-ribosyl)glycinamide + L-glutamine + ATP + H2O = 2-formamido-N(1)-(5-O-phospho-beta-D-ribosyl)acetamidine + L-glutamate + ADP + phosphate + H(+). It functions in the pathway purine metabolism; IMP biosynthesis via de novo pathway; 5-amino-1-(5-phospho-D-ribosyl)imidazole from N(2)-formyl-N(1)-(5-phospho-D-ribosyl)glycinamide: step 1/2. Its function is as follows. Phosphoribosylformylglycinamidine synthase involved in the purines biosynthetic pathway. Catalyzes the ATP-dependent conversion of formylglycinamide ribonucleotide (FGAR) and glutamine to yield formylglycinamidine ribonucleotide (FGAM) and glutamate. In Escherichia coli (strain UTI89 / UPEC), this protein is Phosphoribosylformylglycinamidine synthase.